A 376-amino-acid chain; its full sequence is WD repeat-containing protein wdr-5.1 (376 aa).

Positions 1 to 24 (MDTSENAASAAEQQPTQQIDQLTV) are enriched in polar residues. The tract at residues 1-70 (MDTSENAASA…TPNPNAAGAS (70 aa)) is disordered. Low complexity predominate over residues 25–53 (PNAPDGGSSAPAPSTSPNSISPSNPTGTP). 7 WD repeats span residues 85-115 (GHTKSISSAKFSPCGKYLGTSSADKTVKIWN), 127-157 (GHKLGVNDIAWSSDSRCVVSASDDKTLKIFE), 169-199 (GHNNYVFCCNFNPQSSLVVSGSFDESVRIWD), 211-241 (AHSDPVSAVSFNRDGSLIASGSYDGLVRIWD), 254-284 (DENPPVAFVKFSPNGKYILASNLDSTLKLWD), 296-329 (GHENSKYCIFANFSVTGGKWIISGSEDCKIYIWN), and 341-373 (GHTQPVLASDCHPVQNIIASGALEPDNKIHIWR).

Belongs to the WD repeat WDR5/wds family. As to quaternary structure, component of the SET2 complex (also known as the SET1/COMPASS complex), which contains at least set-2, swd-2.1, cfp-1, rbbp-5, wdr-5.1, dpy-30 and ash-2. Within the complex, interacts with cfp-1, ash-2, dpy-30 and hda-1. Interacts with histone H3 both unmethylated and methylated at 'Lys-4'. Interacts with jmjd-3.1, ceh-6, sox-2, sem-4 and egl-27. Interacts with set-2. Enriched in the germline. Detected in all nuclei of the embryo. In larvae, expression is detected in the nuclei of seam cells, somatic gonad precursor cells Z1 and Z4, vulval precursor cells, distal tip cells, hypodermal cells, intestinal and muscle cells. Also detected in the neurons from the ventral nerve cord, head and tail region. Expressed in the head and tail region, intestinal cells, muscle cells, cells of the vulva, spermatheca and sheath cells in adults.

The protein localises to the nucleus. In terms of biological role, contributes to histone modification. May position the N-terminus of histone H3 for efficient trimethylation at 'Lys-4'. Required for di- and trimethylation, particularly for the trimethylation at 'Lys-4' of histone H3. Not required for demethylation of histone H3 'Lys-27'. H3 'Lys-4' methylation represents a specific tag for epigenetic transcriptional activation, germline establishment, maintenance and function. Implicated in the epigenetic inheritance of lifespan over several generations. Acts in the germline to limit the longevity of the soma, probably by regulating a lipid metabolism pathway that signals from the germline to the intestine, thereby preventing accumulation of mono-unsaturated fatty acids. Required for RNA interference with probable antagonistic role against hpl-2 function. Plays a role in vulval cell fate specification by acting in the synthetic multivulva pathway independent of set-2. Sex determining protein required in the germline to promote the spermatogenesis to oogenesis switch during the late larval stages of development. Acts with the sex determining factor tra-1, and redundantly with wdr-5.2, to regulate fog-3 expression, which in turn determines germ cell fate. Cooperates with jmjd-3.1, egl-27 and unc-3 to ensure robust transdifferentiation of the Y rectal cell to the PDA motor neuron during larval development. The protein is WD repeat-containing protein wdr-5.1 (wdr-5.1) of Caenorhabditis elegans.